A 133-amino-acid chain; its full sequence is Small ribosomal subunit protein uS12 (133 aa).

Aspartate 89 carries the 3-methylthioaspartic acid modification. The tract at residues 103 to 133 (DTAGVAGRTQRRSKYGAKRPKPGQAAPAKKK) is disordered. Residues 111–123 (TQRRSKYGAKRPK) show a composition bias toward basic residues. Residues 124–133 (PGQAAPAKKK) show a composition bias toward low complexity.

This sequence belongs to the universal ribosomal protein uS12 family. As to quaternary structure, part of the 30S ribosomal subunit. Contacts proteins S8 and S17. May interact with IF1 in the 30S initiation complex.

In terms of biological role, with S4 and S5 plays an important role in translational accuracy. Interacts with and stabilizes bases of the 16S rRNA that are involved in tRNA selection in the A site and with the mRNA backbone. Located at the interface of the 30S and 50S subunits, it traverses the body of the 30S subunit contacting proteins on the other side and probably holding the rRNA structure together. The combined cluster of proteins S8, S12 and S17 appears to hold together the shoulder and platform of the 30S subunit. This is Small ribosomal subunit protein uS12 from Bacteroides thetaiotaomicron (strain ATCC 29148 / DSM 2079 / JCM 5827 / CCUG 10774 / NCTC 10582 / VPI-5482 / E50).